The chain runs to 139 residues: Probable disulfide formation protein C 1 (139 aa).

A helical transmembrane segment spans residues 8–27 (EYALFTAWGASFIATLGSLY). A disulfide bond links Cys37 and Cys40. 2 helical membrane-spanning segments follow: residues 42 to 61 (YQRI…VVKK) and 68 to 85 (YSLP…YHYA). Cys99 and Cys104 are joined by a disulfide. A helical transmembrane segment spans residues 113 to 135 (GFVTIPFLALIGFITIAVCSFIV).

Belongs to the DsbB family. BdbC subfamily.

The protein localises to the cell membrane. In terms of biological role, required for disulfide bond formation in some proteins. This Bacillus cereus (strain ATCC 10987 / NRS 248) protein is Probable disulfide formation protein C 1 (bdbC1).